The sequence spans 88 residues: Small ribosomal subunit protein bS20 (88 aa).

The segment covering 1 to 21 (MANSKSAKKRALQSEKRRQHN) has biased composition (basic residues). Positions 1-27 (MANSKSAKKRALQSEKRRQHNASRSSM) are disordered.

It belongs to the bacterial ribosomal protein bS20 family.

In terms of biological role, binds directly to 16S ribosomal RNA. The sequence is that of Small ribosomal subunit protein bS20 from Shewanella piezotolerans (strain WP3 / JCM 13877).